We begin with the raw amino-acid sequence, 257 residues long: Hydroxyacylglutathione hydrolase (257 aa).

H54, H56, D58, H59, H113, D137, and H175 together coordinate Zn(2+).

The protein belongs to the metallo-beta-lactamase superfamily. Glyoxalase II family. In terms of assembly, monomer. The cofactor is Zn(2+).

It catalyses the reaction an S-(2-hydroxyacyl)glutathione + H2O = a 2-hydroxy carboxylate + glutathione + H(+). It participates in secondary metabolite metabolism; methylglyoxal degradation; (R)-lactate from methylglyoxal: step 2/2. Its function is as follows. Thiolesterase that catalyzes the hydrolysis of S-D-lactoyl-glutathione to form glutathione and D-lactic acid. The chain is Hydroxyacylglutathione hydrolase from Synechocystis sp. (strain ATCC 27184 / PCC 6803 / Kazusa).